Reading from the N-terminus, the 336-residue chain is Phosphate acyltransferase (336 aa).

It belongs to the PlsX family. In terms of assembly, homodimer. Probably interacts with PlsY.

It localises to the cytoplasm. It carries out the reaction a fatty acyl-[ACP] + phosphate = an acyl phosphate + holo-[ACP]. It functions in the pathway lipid metabolism; phospholipid metabolism. Catalyzes the reversible formation of acyl-phosphate (acyl-PO(4)) from acyl-[acyl-carrier-protein] (acyl-ACP). This enzyme utilizes acyl-ACP as fatty acyl donor, but not acyl-CoA. The sequence is that of Phosphate acyltransferase from Pseudomonas putida (strain ATCC 47054 / DSM 6125 / CFBP 8728 / NCIMB 11950 / KT2440).